Here is a 519-residue protein sequence, read N- to C-terminus: Dideacetyl fusicoccin A C-19 hydroxylase (519 aa).

Residues 16–36 (LPVAPILFTALAATIGAFLLS) form a helical membrane-spanning segment. 4 N-linked (GlcNAc...) asparagine glycosylation sites follow: N177, N327, N414, and N432. C454 contributes to the heme binding site.

The protein belongs to the cytochrome P450 family. It depends on heme as a cofactor.

Its subcellular location is the membrane. It participates in mycotoxin biosynthesis. Functionally, cytochrome P450 monooxygenase; part of the 2 gene clusters that mediate the biosynthesis of fusicoccins, diterpene glucosides that display phytohormone-like activity and function as potent activators of plasma membrane H(+)-ATPases in plants by modifying 14-3-3 proteins and cause the plant disease constriction canker. The first step in the pathway is performed by the fusicoccadiene synthase PaFS that possesses both prenyl transferase and terpene cyclase activity, converting isopentenyl diphosphate and dimethylallyl diphosphate into geranylgeranyl diphosphate (GGDP) and successively converting GGDP into fusicocca-2,10(14)-diene, a precursor for fusicoccin H. The second step is the oxidation at the C-8 position by the cytochrome P450 monooxygenase PaP450-2 to yield fusicocca-2,10(14)-diene-8-beta-ol. The cytochrome P450 monooxygenase PaP450-1 then catalyzes the hydroxylation at the C-16 position to produce fusicocca-2,10(14)-diene-8-beta,16-diol. The dioxygenase fc-dox then catalyzes the 16-oxydation of fusicocca-2,10(14)-diene-8-beta,16-diol to yield an aldehyde (8-beta-hydroxyfusicocca-1,10(14)-dien-16-al). The short-chain dehydrogenase/reductase fc-sdr catalyzes the reduction of the aldehyde to yield fusicocca-1,10(14)-diene-8-beta,16-diol. The next step is the hydroxylation at C-9 performed by the cytochrome P450 monooxygenase PaP450-3 that leads to fusicoccin H aglycon which is glycosylated to fusicoccin H by the O-glycosyltransferase PaGT. Hydroxylation at C-12 by the cytochrome P450 monooxygenase PaP450-4 leads then to the production of fusicoccin Q and is followed by methylation by the O-methyltransferase PaMT to yield fusicoccin P. Fusicoccin P is further converted to fusicoccin J via prenylation by the O-glucose prenyltransferase PaPT. Cytochrome P450 monooxygenase PaP450-5 then performs hydroxylation at C-19 to yield dideacetyl-fusicoccin A which is acetylated to 3'-O-deacetyl-fusicoccin A by the O-acetyltransferase PaAT-2. Finally, a another acetylation by the O-acetyltransferase PaAT-1 yields fusicoccin A. This Phomopsis amygdali (Fusicoccum amygdali) protein is Dideacetyl fusicoccin A C-19 hydroxylase.